The chain runs to 89 residues: Putative regulatory protein Dalk_1931 (89 aa).

It belongs to the RemA family.

This Desulfatibacillum aliphaticivorans protein is Putative regulatory protein Dalk_1931.